A 338-amino-acid chain; its full sequence is Lipoate-protein ligase A (338 aa).

The region spanning 29–216 (PATQRVLFLW…AFFSHYGERV (188 aa)) is the BPL/LPL catalytic domain. ATP contacts are provided by residues Arg-71, 76–79 (GAVF), and Lys-134. Lys-134 provides a ligand contact to (R)-lipoate.

This sequence belongs to the LplA family. Monomer.

Its subcellular location is the cytoplasm. It catalyses the reaction L-lysyl-[lipoyl-carrier protein] + (R)-lipoate + ATP = N(6)-[(R)-lipoyl]-L-lysyl-[lipoyl-carrier protein] + AMP + diphosphate + H(+). The protein operates within protein modification; protein lipoylation via exogenous pathway; protein N(6)-(lipoyl)lysine from lipoate: step 1/2. It participates in protein modification; protein lipoylation via exogenous pathway; protein N(6)-(lipoyl)lysine from lipoate: step 2/2. Catalyzes both the ATP-dependent activation of exogenously supplied lipoate to lipoyl-AMP and the transfer of the activated lipoyl onto the lipoyl domains of lipoate-dependent enzymes. This is Lipoate-protein ligase A from Klebsiella pneumoniae subsp. pneumoniae (strain ATCC 700721 / MGH 78578).